The chain runs to 493 residues: NAD(P)H dehydrogenase (quinone) (493 aa).

FAD-binding positions include 12–13 (PA), 35–37 (DCD), 42–43 (AA), Lys52, Gly117, Asp317, 324–325 (LA), and Tyr450.

The protein belongs to the class-I pyridine nucleotide-disulfide oxidoreductase family. Homotetramer. Requires FAD as cofactor.

The catalysed reaction is a quinone + NADH + H(+) = a quinol + NAD(+). The enzyme catalyses a quinone + NADPH + H(+) = a quinol + NADP(+). May contribute to virulence by increasing resistance to reactive oxygen intermediates. It can reduce 2,6-dimethyl-1,4-benzoquinone (DMBQ), 5-hydroxy-1,4-naphthaquinone (5-HNQ) and menadione. The chain is NAD(P)H dehydrogenase (quinone) (lpdA) from Mycobacterium tuberculosis (strain CDC 1551 / Oshkosh).